Here is a 71-residue protein sequence, read N- to C-terminus: Sec-independent protein translocase protein TatA (71 aa).

Residues 1–21 (MGSFSLLHWLVVLVIVLLVFG) traverse the membrane as a helical segment. Positions 43-71 (LREDDKPTDQLGSTSQSTASGPQQDHGKH) are disordered. Polar residues predominate over residues 52-65 (QLGSTSQSTASGPQ).

Belongs to the TatA/E family. In terms of assembly, the Tat system comprises two distinct complexes: a TatABC complex, containing multiple copies of TatA, TatB and TatC subunits, and a separate TatA complex, containing only TatA subunits. Substrates initially bind to the TatABC complex, which probably triggers association of the separate TatA complex to form the active translocon.

Its subcellular location is the cell inner membrane. Functionally, part of the twin-arginine translocation (Tat) system that transports large folded proteins containing a characteristic twin-arginine motif in their signal peptide across membranes. TatA could form the protein-conducting channel of the Tat system. This is Sec-independent protein translocase protein TatA from Xylella fastidiosa (strain 9a5c).